The primary structure comprises 193 residues: Ion-translocating oxidoreductase complex subunit A (193 aa).

6 consecutive transmembrane segments (helical) span residues 5-25, 39-59, 62-82, 102-122, 134-154, and 171-191; these read LLLF…FLGL, IGMG…AWMV, FILL…LVIA, LLGI…VALL, AVYG…FAAI, and SIAL…TGLV.

Belongs to the NqrDE/RnfAE family. In terms of assembly, the complex is composed of six subunits: RnfA, RnfB, RnfC, RnfD, RnfE and RnfG.

The protein localises to the cell inner membrane. Part of a membrane-bound complex that couples electron transfer with translocation of ions across the membrane. The sequence is that of Ion-translocating oxidoreductase complex subunit A from Yersinia pestis (strain Pestoides F).